Reading from the N-terminus, the 621-residue chain is tRNA uridine 5-carboxymethylaminomethyl modification enzyme MnmG (621 aa).

Position 8–13 (8–13 (GAGHAG)) interacts with FAD. 269-283 (GPRYCPSVEDKIFRF) is a binding site for NAD(+).

It belongs to the MnmG family. In terms of assembly, homodimer. Heterotetramer of two MnmE and two MnmG subunits. It depends on FAD as a cofactor.

It is found in the cytoplasm. Its function is as follows. NAD-binding protein involved in the addition of a carboxymethylaminomethyl (cmnm) group at the wobble position (U34) of certain tRNAs, forming tRNA-cmnm(5)s(2)U34. The sequence is that of tRNA uridine 5-carboxymethylaminomethyl modification enzyme MnmG from Chlorobium chlorochromatii (strain CaD3).